Reading from the N-terminus, the 200-residue chain is MEKFYKENEGKPENKGRAEDEGSTEEGGKADEDKSDAEGKPARQGKLEVEGGPGEQAQQKGEGKPEKQGKSDGEGKRQGESKPDSQAKSASEARAAEKRPAEDYVPRKAKRKTDRGTDDSPKNSQEDLQDRHVSSEEMMRECADMTRAQEELRKRQKMGGFHWVPRDAQDALVPRGQRGVRGVRGGGGRGQKDLEDAPFV.

5 stretches are compositionally biased toward basic and acidic residues: residues 1–49 (MEKF…KLEV), 61–85 (GEGKPEKQGKSDGEGKRQGESKPDS), 94–106 (RAAEKRPAEDYVP), 114–153 (DRGTDDSPKNSQEDLQDRHVSSEEMMRECADMTRAQEELR), and 190–200 (GQKDLEDAPFV). The interval 1–200 (MEKFYKENEG…QKDLEDAPFV (200 aa)) is disordered.

The protein belongs to the TFS-II family. TFA subfamily.

It is found in the nucleus. Functionally, may be involved in transcriptional regulation. The polypeptide is Transcription elongation factor A protein-like 5 (Tceal5) (Mus musculus (Mouse)).